Here is a 522-residue protein sequence, read N- to C-terminus: Involucrin (522 aa).

Over residues 1–15 the composition is skewed to polar residues; sequence MSQQHTLPVTLSPAL. Disordered stretches follow at residues 1–126, 159–329, and 366–496; these read MSQQ…LEEE, QEGQ…LVQQ, and QEGQ…QPVL. Residues 76 to 91 show a composition bias toward low complexity; it reads EQQQQEPQEQELQQQH. Residues 92–126 show a composition bias toward basic and acidic residues; sequence WEQHEEHQKAENPEQQLKQEKAQRDQQLNEHLEEE. A compositionally biased stretch (low complexity) spans 169-181; it reads QEGQLELPEQQEG. Composition is skewed to basic and acidic residues over residues 182-198, 214-231, 252-264, 274-290, and 305-323; these read QLEH…HLDQ, KHLE…HQKG, QLKH…KQPE, KHLE…EHQE, and QLEE…EGQL. The segment covering 375–389 has biased composition (low complexity); sequence QQQGQLEVSEQQVGQ. Basic and acidic residues-rich tracts occupy residues 391 to 401, 409 to 418, and 431 to 465; these read KHLEQEGKQLE, QLKHLEKQEA, and KHPE…DLEQ. Residues 466–479 are compositionally biased toward low complexity; it reads QKGQLEQQQGQLEQ.

It belongs to the involucrin family. Directly or indirectly cross-linked to cornifelin (CNFN). Substrate of transglutaminase. Specific glutamines or lysines are cross-linked to keratins, desmoplakin and to inter involucrin molecules. In terms of tissue distribution, keratinocytes of epidermis and other stratified squamous epithelia.

The protein resides in the cytoplasm. Functionally, part of the insoluble cornified cell envelope (CE) of stratified squamous epithelia. The sequence is that of Involucrin (IVL) from Hylobates lar (Lar gibbon).